Consider the following 515-residue polypeptide: Bifunctional purine biosynthesis protein PurH (515 aa).

Residues 1–145 (MTKRALISVS…KNHASVTVVV (145 aa)) form the MGS-like domain.

This sequence belongs to the PurH family.

The catalysed reaction is (6R)-10-formyltetrahydrofolate + 5-amino-1-(5-phospho-beta-D-ribosyl)imidazole-4-carboxamide = 5-formamido-1-(5-phospho-D-ribosyl)imidazole-4-carboxamide + (6S)-5,6,7,8-tetrahydrofolate. It carries out the reaction IMP + H2O = 5-formamido-1-(5-phospho-D-ribosyl)imidazole-4-carboxamide. It functions in the pathway purine metabolism; IMP biosynthesis via de novo pathway; 5-formamido-1-(5-phospho-D-ribosyl)imidazole-4-carboxamide from 5-amino-1-(5-phospho-D-ribosyl)imidazole-4-carboxamide (10-formyl THF route): step 1/1. Its pathway is purine metabolism; IMP biosynthesis via de novo pathway; IMP from 5-formamido-1-(5-phospho-D-ribosyl)imidazole-4-carboxamide: step 1/1. In Streptococcus pyogenes serotype M2 (strain MGAS10270), this protein is Bifunctional purine biosynthesis protein PurH.